The primary structure comprises 107 residues: Putative ATP synthase subunit f, mitochondrial (107 aa).

This sequence belongs to the ATPase F chain family. As to quaternary structure, F-type ATPases have 2 components, CF(1) - the catalytic core - and CF(0) - the membrane proton channel. CF(0) seems to have nine subunits: a, b, c, d, e, f, g, F6 and 8 (or A6L).

The protein localises to the mitochondrion membrane. Functionally, mitochondrial membrane ATP synthase (F(1)F(0) ATP synthase or Complex V) produces ATP from ADP in the presence of a proton gradient across the membrane which is generated by electron transport complexes of the respiratory chain. F-type ATPases consist of two structural domains, F(1) - containing the extramembraneous catalytic core and F(0) - containing the membrane proton channel, linked together by a central stalk and a peripheral stalk. During catalysis, ATP synthesis in the catalytic domain of F(1) is coupled via a rotary mechanism of the central stalk subunits to proton translocation. Part of the complex F(0) domain. Minor subunit located with subunit a in the membrane. The protein is Putative ATP synthase subunit f, mitochondrial of Drosophila melanogaster (Fruit fly).